The chain runs to 180 residues: Shikimate kinase (180 aa).

14–19 (GAGKST) is a binding site for ATP. S18 serves as a coordination point for Mg(2+). Residues D36, R60, and G82 each coordinate substrate. An ATP-binding site is contributed by R120. Residue R140 participates in substrate binding. Q157 contributes to the ATP binding site.

The protein belongs to the shikimate kinase family. In terms of assembly, monomer. Mg(2+) is required as a cofactor.

The protein resides in the cytoplasm. The catalysed reaction is shikimate + ATP = 3-phosphoshikimate + ADP + H(+). It functions in the pathway metabolic intermediate biosynthesis; chorismate biosynthesis; chorismate from D-erythrose 4-phosphate and phosphoenolpyruvate: step 5/7. In terms of biological role, catalyzes the specific phosphorylation of the 3-hydroxyl group of shikimic acid using ATP as a cosubstrate. The sequence is that of Shikimate kinase from Haemophilus influenzae (strain PittGG).